The sequence spans 129 residues: Follitropin subunit beta (129 aa).

An N-terminal signal peptide occupies residues 1–20 (MKTVQFCFLFCCWKAICCNS). Cystine bridges form between Cys-21/Cys-69, Cys-35/Cys-84, Cys-38/Cys-122, Cys-46/Cys-100, Cys-50/Cys-102, and Cys-105/Cys-112. N-linked (GlcNAc...) asparagine glycans are attached at residues Asn-25 and Asn-42.

This sequence belongs to the glycoprotein hormones subunit beta family. As to quaternary structure, heterodimer. The active follitropin is a heterodimer composed of an alpha chain/CGA shared with other hormones and a unique beta chain/FSHB shown here.

The protein localises to the secreted. In terms of biological role, together with the alpha chain CGA constitutes follitropin, the follicle-stimulating hormone, and provides its biological specificity to the hormone heterodimer. Binds FSHR, a G protein-coupled receptor, on target cells to activate downstream signaling pathways. Follitropin is involved in follicle development and spermatogenesis in reproductive organs. The polypeptide is Follitropin subunit beta (FSHB) (Saimiri boliviensis boliviensis (Bolivian squirrel monkey)).